The primary structure comprises 307 residues: Epimerase family protein ML0860 (307 aa).

This sequence belongs to the NAD(P)-dependent epimerase/dehydratase family. SDR39U1 subfamily.

The chain is Epimerase family protein ML0860 from Mycobacterium leprae (strain TN).